The following is a 231-amino-acid chain: Large ribosomal subunit protein uL1 (231 aa).

It belongs to the universal ribosomal protein uL1 family. As to quaternary structure, part of the 50S ribosomal subunit.

Binds directly to 23S rRNA. The L1 stalk is quite mobile in the ribosome, and is involved in E site tRNA release. Functionally, protein L1 is also a translational repressor protein, it controls the translation of the L11 operon by binding to its mRNA. This is Large ribosomal subunit protein uL1 from Verminephrobacter eiseniae (strain EF01-2).